A 101-amino-acid chain; its full sequence is Small ribosomal subunit protein uS14 (101 aa).

This sequence belongs to the universal ribosomal protein uS14 family. Part of the 30S ribosomal subunit. Contacts proteins S3 and S10.

Functionally, binds 16S rRNA, required for the assembly of 30S particles and may also be responsible for determining the conformation of the 16S rRNA at the A site. This chain is Small ribosomal subunit protein uS14, found in Chlamydia pneumoniae (Chlamydophila pneumoniae).